The sequence spans 471 residues: P2X purinoceptor 2 (471 aa).

The Cytoplasmic segment spans residues methionine 1–glycine 42. 6 disulfide bridges follow: cysteine 21–cysteine 439, cysteine 125–cysteine 176, cysteine 136–cysteine 159, cysteine 142–cysteine 170, cysteine 226–cysteine 236, and cysteine 270–cysteine 279. The helical transmembrane segment at valine 43 to valine 63 threads the bilayer. The Extracellular portion of the chain corresponds to glutamine 64–serine 337. Lysine 81 and lysine 83 together coordinate ATP. Asparagine 133 carries an N-linked (GlcNAc...) asparagine glycan. N-linked (GlcNAc...) asparagine glycosylation is present at asparagine 194. Threonine 196 contributes to the ATP binding site. 3 residues coordinate ATP: serine 296, asparagine 300, and arginine 302. Asparagine 310 is a glycosylation site (N-linked (GlcNAc...) asparagine). Position 319 (lysine 319) interacts with ATP. Residues alanine 320–alanine 333 form a pore-forming motif region. A helical transmembrane segment spans residues leucine 338–leucine 358. Residues cysteine 359–leucine 471 are Cytoplasmic-facing. A disordered region spans residues glycine 400 to leucine 471.

Belongs to the P2X receptor family. As to quaternary structure, homotrimer and heterotrimer; functional P2XRs are organized as homomeric and heteromeric trimers. Homotrimer. Forms heterotrimer with P2RX1. Forms heterotrimer with P2RX6. Forms heterotrimer with P2RX3. Expressed in both the central and peripheral nervous system, as well as in the pituitary gland.

The protein localises to the cell membrane. The catalysed reaction is Ca(2+)(in) = Ca(2+)(out). It catalyses the reaction K(+)(in) = K(+)(out). The enzyme catalyses Na(+)(in) = Na(+)(out). Fast activation by external ATP. Exhibits slow desensitization during prolonged ATP activation. Not sensitive to the ATP agonist:alpha/beta-methylene-ATP. In terms of biological role, ATP-gated nonselective transmembrane cation channel permeable to potassium, sodium and calcium. Activation by extracellular ATP induces a variety of cellular responses, such as excitatory postsynaptic responses in sensory neurons, neuromuscular junctions (NMJ) formation, hearing, perception of taste and peristalsis. In the inner ear, regulates sound transduction and auditory neurotransmission, outer hair cell electromotility, inner ear gap junctions, and K(+) recycling. Mediates synaptic transmission between neurons and from neurons to smooth muscle. The protein is P2X purinoceptor 2 of Homo sapiens (Human).